A 246-amino-acid chain; its full sequence is Cold-regulated protein 27 (246 aa).

2 disordered regions span residues Met1–Ala39 and Glu151–Leu232. The span at Ser168–Ser180 shows a compositional bias: low complexity.

Its subcellular location is the nucleus. In terms of biological role, together with COR28, involved in central circadian clock regulation and in flowering promotion, by binding to the chromatin of clock-associated evening genes TOC1, PRR5, ELF4 and cold-responsive genes in order to repress their transcription. Negative regulator of freezing tolerance. This is Cold-regulated protein 27 from Arabidopsis thaliana (Mouse-ear cress).